Here is a 277-residue protein sequence, read N- to C-terminus: Formamidopyrimidine-DNA glycosylase (277 aa).

The Schiff-base intermediate with DNA role is filled by P2. The active-site Proton donor is the E3. K60 functions as the Proton donor; for beta-elimination activity in the catalytic mechanism. 3 residues coordinate DNA: H94, R113, and R158. An FPG-type zinc finger spans residues 243–277 (WVYNRAGEPCKVCGDVIQRIKLGGRSSHFCRQCQV). Catalysis depends on R267, which acts as the Proton donor; for delta-elimination activity.

Belongs to the FPG family. In terms of assembly, monomer. It depends on Zn(2+) as a cofactor.

The catalysed reaction is Hydrolysis of DNA containing ring-opened 7-methylguanine residues, releasing 2,6-diamino-4-hydroxy-5-(N-methyl)formamidopyrimidine.. It carries out the reaction 2'-deoxyribonucleotide-(2'-deoxyribose 5'-phosphate)-2'-deoxyribonucleotide-DNA = a 3'-end 2'-deoxyribonucleotide-(2,3-dehydro-2,3-deoxyribose 5'-phosphate)-DNA + a 5'-end 5'-phospho-2'-deoxyribonucleoside-DNA + H(+). Functionally, involved in base excision repair of DNA damaged by oxidation or by mutagenic agents. Acts as a DNA glycosylase that recognizes and removes damaged bases. Has a preference for oxidized purines, such as 7,8-dihydro-8-oxoguanine (8-oxoG). Has AP (apurinic/apyrimidinic) lyase activity and introduces nicks in the DNA strand. Cleaves the DNA backbone by beta-delta elimination to generate a single-strand break at the site of the removed base with both 3'- and 5'-phosphates. This is Formamidopyrimidine-DNA glycosylase from Trichormus variabilis (strain ATCC 29413 / PCC 7937) (Anabaena variabilis).